We begin with the raw amino-acid sequence, 58 residues long: uncharacterized protein (58 aa).

It localises to the plastid. The protein resides in the chloroplast. This is an uncharacterized protein from Chlamydomonas reinhardtii (Chlamydomonas smithii).